A 303-amino-acid polypeptide reads, in one-letter code: MTCCAGCGSAARPARMAWRSGRCARTGRLRAGLRKAPMALTLGANHSGKSMYQRNLIKGLAQLPVALVGIDCKRGVEQAAFAPRLSALVTTPDDAASLLGVLVAEMEGRFDLLSRHGVSDLWELPAEVRPVPVVVLVDEVAELFLISSKKDEERRERIVTALIRLAQMARAIGIHLEICGQRFGSDLGKGATMLRAQLTGRVVHRVNDKQTAEMGLADVAPDAVPAASLIPMNRPGTAVAADPSGGWSKIRTPETSRDEVVAVCREFAHLIPDLPFLEPFRPRVPAEVPAAGPSMVKPRPLTE.

The region spanning T26 to E213 is the FtsK domain. Residue G43–S50 coordinates ATP.

Involved in sporulation inhibition and pock formation. This chain is Sporulation regulatory protein (spi), found in Streptomyces azureus.